The chain runs to 416 residues: Queuine tRNA-ribosyltransferase accessory subunit 2 (416 aa).

Zn(2+) contacts are provided by Cys350, Cys352, Cys355, and His381.

It belongs to the queuine tRNA-ribosyltransferase family. QTRT2 subfamily. In terms of assembly, heterodimer of a catalytic subunit qtrt1 and an accessory subunit qtrt2. It depends on Zn(2+) as a cofactor.

It is found in the cytoplasm. The protein localises to the mitochondrion outer membrane. Functionally, non-catalytic subunit of the queuine tRNA-ribosyltransferase (TGT) that catalyzes the base-exchange of a guanine (G) residue with queuine (Q) at position 34 (anticodon wobble position) in tRNAs with GU(N) anticodons (tRNA-Asp, -Asn, -His and -Tyr), resulting in the hypermodified nucleoside queuosine (7-(((4,5-cis-dihydroxy-2-cyclopenten-1-yl)amino)methyl)-7-deazaguanosine). The chain is Queuine tRNA-ribosyltransferase accessory subunit 2 from Danio rerio (Zebrafish).